The primary structure comprises 334 residues: HTH-type transcriptional repressor PurR (334 aa).

Residues 2–56 enclose the HTH lacI-type domain; sequence ATIKDVARMAGVSTTTVSHVINKTRFVAEATQKKVLAAVDDLNYAPSAVARSLKC. The H-T-H motif DNA-binding region spans 4–23; the sequence is IKDVARMAGVSTTTVSHVIN. A DNA-binding region spans residues 48 to 56; that stretch reads SAVARSLKC. Phe-73, Lys-189, Thr-191, Phe-220, and Asp-274 together coordinate hypoxanthine.

As to quaternary structure, homodimer.

Its pathway is purine metabolism; purine nucleotide biosynthesis [regulation]. Its function is as follows. Is the main repressor of the genes involved in the de novo synthesis of purine nucleotides, regulating purB, purC, purEK, purF, purHD, purL, purMN and guaBA expression. PurR is allosterically activated to bind its cognate DNA by binding the purine corepressors, hypoxanthine or guanine, thereby effecting transcription repression. In Photobacterium profundum (strain SS9), this protein is HTH-type transcriptional repressor PurR.